The sequence spans 447 residues: N-succinylarginine dihydrolase (447 aa).

Substrate contacts are provided by residues 21 to 30, Asn112, and 139 to 140; these read AGLAHGNVAS and HR. Glu176 is an active-site residue. A substrate-binding site is contributed by Arg215. His251 is a catalytic residue. Substrate is bound by residues Asp253 and Asn364. The active-site Nucleophile is Cys370.

Belongs to the succinylarginine dihydrolase family. As to quaternary structure, homodimer.

It carries out the reaction N(2)-succinyl-L-arginine + 2 H2O + 2 H(+) = N(2)-succinyl-L-ornithine + 2 NH4(+) + CO2. Its pathway is amino-acid degradation; L-arginine degradation via AST pathway; L-glutamate and succinate from L-arginine: step 2/5. Catalyzes the hydrolysis of N(2)-succinylarginine into N(2)-succinylornithine, ammonia and CO(2). In Chromohalobacter salexigens (strain ATCC BAA-138 / DSM 3043 / CIP 106854 / NCIMB 13768 / 1H11), this protein is N-succinylarginine dihydrolase.